The chain runs to 228 residues: CD9 antigen (228 aa).

Over 1–12 (MPVKGGTKCIKY) the chain is Cytoplasmic. A lipid anchor (S-palmitoyl cysteine) is attached at C9. The helical transmembrane segment at 13–33 (LLFGFNFIFWLAGIAVLAIGL) threads the bilayer. Over 34 to 55 (WLRFDSQTKSIFEQETNNNNSS) the chain is Extracellular. N-linked (GlcNAc...) asparagine glycans are attached at residues N52 and N53. The helical transmembrane segment at 56–76 (FYTGVYILIGAGALMMLVGFL) threads the bilayer. Over 77–87 (GCCGAVQESQC) the chain is Cytoplasmic. Residues C78, C79, and C87 are each lipidated (S-palmitoyl cysteine). Residues 88–111 (MLGLFFGFLLVIFAIEIAAAIWGY) traverse the membrane as a helical segment. Over 112–195 (SHKDEVIKEV…KEVFDNKFHI (84 aa)) the chain is Extracellular. Disulfide bonds link C152–C181 and C153–C167. A helical membrane pass occupies residues 196–221 (IGAVGIGIAVVMIFGMIFSMILCCAI). S-palmitoyl cysteine attachment occurs at residues C218 and C219. Residues 222–228 (RRNREMV) lie on the Cytoplasmic side of the membrane.

Belongs to the tetraspanin (TM4SF) family. Forms both disulfide-linked homodimers and higher homooligomers as well as heterooligomers with other members of the tetraspanin family. Interacts (via the second extracellular domain) with integrin ITGAV:ITGB3. Interacts with integrin ITGA6:ITGB1; interaction takes place in oocytes and is involved in sperm-egg fusion. Part of integrin-tetraspanin complexes composed of CD81, beta-1 and beta-2 integrins in the membrane of monocyte/macrophages. Interacts with CD63; identified in a complex with CD63 and ITGB3. Associates with CR2/CD21 and with PTGFRN/CD9P1. Part of a complex composed of CD9, CD81, PTGFRN and IGSF8. Interacts directly with IGSF8. Interacts with PDPN; this interaction is homophilic and attenuates platelet aggregation and pulmonary metastasis induced by PDPN. Interacts (on T cell side) with CD81 at immunological synapses between antigen-presenting cells and T cells. In terms of processing, palmitoylated at a low, basal level in unstimulated platelets. The level of palmitoylation increases when platelets are activated by thrombin (in vitro). The protein exists in three forms with molecular masses between 22 and 27 kDa, and is known to carry covalently linked fatty acids. Palmitoylation by ZDHHC2 regulates CD9 expression, association with other tetraspanin family proteins and function in cell adhesion.

The protein resides in the cell membrane. It localises to the membrane. The protein localises to the secreted. Its subcellular location is the extracellular exosome. In terms of biological role, integral membrane protein associated with integrins, which regulates different processes, such as sperm-egg fusion, platelet activation and aggregation, and cell adhesion. Present at the cell surface of oocytes and plays a key role in sperm-egg fusion, possibly by organizing multiprotein complexes and the morphology of the membrane required for the fusion. In myoblasts, associates with CD81 and PTGFRN and inhibits myotube fusion during muscle regeneration. In macrophages, associates with CD81 and beta-1 and beta-2 integrins, and prevents macrophage fusion into multinucleated giant cells specialized in ingesting complement-opsonized large particles. Also prevents the fusion between mononuclear cell progenitors into osteoclasts in charge of bone resorption. Acts as a receptor for PSG17. Involved in platelet activation and aggregation. Regulates paranodal junction formation. Involved in cell adhesion, cell motility and tumor metastasis. This is CD9 antigen from Chlorocebus aethiops (Green monkey).